We begin with the raw amino-acid sequence, 173 residues long: MARVEL domain-containing protein 1 (173 aa).

M1 bears the N-acetylmethionine mark. At 1 to 29 (MLPPPPRQPPPQARAARGAVRLQRPFLRS) the chain is on the cytoplasmic side. Residues 26–166 (FLRSPLGVLR…SALYGCGRRC (141 aa)) form the MARVEL domain. A helical membrane pass occupies residues 30-50 (PLGVLRLLQLLAGAAFWITIA). Over 51–59 (TSKYQGPVH) the chain is Extracellular. The helical transmembrane segment at 60–80 (FALFVSVLFWLLTLGLYFLTL) threads the bilayer. At 81–94 (LGKHELVPVLGSRW) the chain is on the cytoplasmic side. The helical transmembrane segment at 95–115 (LMVNVAHDVLAAALYGAATGI) threads the bilayer. Residues 116 to 138 (MSDQMQRHSYCNLKDYPLPCAYH) are Extracellular-facing. The helical transmembrane segment at 139–159 (AFLAAAVCGGVCHGLYLLSAL) threads the bilayer. Topologically, residues 160–173 (YGCGRRCQGKQEVA) are cytoplasmic.

In terms of tissue distribution, widely expressed in normal tissues. Down-regulated in multiple primary tumors.

The protein resides in the cell membrane. The protein localises to the cytoplasm. It localises to the cytoskeleton. Its subcellular location is the nucleus. Functionally, microtubule-associated protein that exhibits cell cycle-dependent localization and can inhibit cell proliferation and migration. The sequence is that of MARVEL domain-containing protein 1 (MARVELD1) from Homo sapiens (Human).